A 72-amino-acid polypeptide reads, in one-letter code: UPF0150 protein jhp_0960 (72 aa).

Belongs to the UPF0150 family.

This is UPF0150 protein jhp_0960 from Helicobacter pylori (strain J99 / ATCC 700824) (Campylobacter pylori J99).